The following is a 428-amino-acid chain: Trigger factor (428 aa).

Positions Ala-165 to Pro-240 constitute a PPIase FKBP-type domain.

This sequence belongs to the FKBP-type PPIase family. Tig subfamily.

Its subcellular location is the cytoplasm. It carries out the reaction [protein]-peptidylproline (omega=180) = [protein]-peptidylproline (omega=0). Functionally, involved in protein export. Acts as a chaperone by maintaining the newly synthesized protein in an open conformation. Functions as a peptidyl-prolyl cis-trans isomerase. The chain is Trigger factor from Prosthecochloris aestuarii (strain DSM 271 / SK 413).